We begin with the raw amino-acid sequence, 446 residues long: Probable D-serine dehydratase (446 aa).

N6-(pyridoxal phosphate)lysine is present on Lys116.

This sequence belongs to the serine/threonine dehydratase family. DsdA subfamily. Pyridoxal 5'-phosphate is required as a cofactor.

The enzyme catalyses D-serine = pyruvate + NH4(+). In Bacillus cereus (strain ZK / E33L), this protein is Probable D-serine dehydratase.